The following is a 153-amino-acid chain: MGVSLLWALLQDMVLAAIPALGFAMVFNVPVRALRYCALLGAIGHGSRMLMIHFGMNIELASLVASIMIGINWSRWLLAHPKVFTVAAVIPMFPGISAYTAMISVVEISHLGYSEALMSTMVTNFLKASFIVGALSIGLSLPGLWLYRKRPGV.

The next 4 helical transmembrane spans lie at 7-27, 51-71, 83-103, and 125-145; these read WALL…AMVF, MIHF…MIGI, VFTV…TAMI, and FLKA…PGLW.

The protein belongs to the ThrE exporter (TC 2.A.79) family. In terms of assembly, the transporter is composed of YjjB and YjjP.

Its subcellular location is the cell inner membrane. In terms of biological role, involved in succinate export with YjjP. Both proteins are required for export. In Yersinia pestis bv. Antiqua (strain Antiqua), this protein is Probable succinate transporter subunit YjjB.